Reading from the N-terminus, the 151-residue chain is Large ribosomal subunit protein bL9 (151 aa).

It belongs to the bacterial ribosomal protein bL9 family.

Functionally, binds to the 23S rRNA. The sequence is that of Large ribosomal subunit protein bL9 from Lactobacillus delbrueckii subsp. bulgaricus (strain ATCC BAA-365 / Lb-18).